The sequence spans 122 residues: Large ribosomal subunit protein uL14 (122 aa).

The protein belongs to the universal ribosomal protein uL14 family. Part of the 50S ribosomal subunit. Forms a cluster with proteins L3 and L19. In the 70S ribosome, L14 and L19 interact and together make contacts with the 16S rRNA in bridges B5 and B8.

Binds to 23S rRNA. Forms part of two intersubunit bridges in the 70S ribosome. This Rhizobium etli (strain CIAT 652) protein is Large ribosomal subunit protein uL14.